We begin with the raw amino-acid sequence, 150 residues long: MQIILLEKVANLGNLGDIVKVKDGYARNFLIPNRKARRATKDAIAEFEVRRAELEKVAAEKLAAAQAVGEKLNGQTFEITQKSGVDGRLFGSVTNGDVAELLKKAGYEIEKAQVRMPEGPLKMIGEHGVQVALHTDVLVDVTVNVIGDHA.

Belongs to the bacterial ribosomal protein bL9 family.

Its function is as follows. Binds to the 23S rRNA. This is Large ribosomal subunit protein bL9 from Burkholderia pseudomallei (strain 668).